The sequence spans 765 residues: Glucosamine inositolphosphorylceramide transferase 1 (765 aa).

A run of 3 helical transmembrane segments spans residues 43 to 63 (FFASCFGFYAFVAATYAWFVF), 394 to 414 (VILGYASLAAAISVVILLGFL), and 476 to 496 (MGKFTLGVIVILGLLLTCVGV). Residues asparagine 553, 577-582 (NSLNNR), 598-600 (DDD), arginine 628, and 683-687 (FNCED) each bind substrate. Aspartate 600 serves as a coordination point for Mn(2+). Residues cysteine 685 and cysteine 738 are joined by a disulfide bond. Residue aspartate 687 is part of the active site.

It belongs to the glycosyltransferase 64 family. The cofactor is Mn(2+). Specifically and highly expressed in developing embryos and mature seeds. Also detected at low levels in stigma and pollen.

It localises to the membrane. The enzyme catalyses an N-(2R-hydroxy-very-long-chain fatty acyl)-(R)-4-hydroxysphingoid base + a 1,2-diacyl-sn-glycero-3-phospho-(1D-myo-inositol) = a 1D-myo-inositol-1-phospho-N-[(R)-2-hydroxy-very-long-chain fatty acyl]-(R)-4-hydroxysphingoid base + a 1,2-diacyl-sn-glycerol. The protein operates within sphingolipid metabolism. Its function is as follows. Glycosyltransferase that mediates the glycosylation of glycosylinositol phosphorylceramides (GIPCs), the major sphingolipids in the plasma membrane; acts as a HexN(Ac)-specific GIPC sugar transferase and accepts glucosamine (GlcN) and N-acetylglucosamine (GlcNAc) as the sugar unit. Responsible for the glycosylation of a subgroup of GIPCs found in seeds and pollen that contain GlcNAc and GlcN (GlcN(Ac)). Maybe involved in the maintenance of cell-cell adhesion. The protein is Glucosamine inositolphosphorylceramide transferase 1 of Arabidopsis thaliana (Mouse-ear cress).